The primary structure comprises 518 residues: ATP synthase subunit alpha (518 aa).

An ATP-binding site is contributed by 169-176; sequence GDRQTGKT.

The protein belongs to the ATPase alpha/beta chains family. In terms of assembly, F-type ATPases have 2 components, CF(1) - the catalytic core - and CF(0) - the membrane proton channel. CF(1) has five subunits: alpha(3), beta(3), gamma(1), delta(1), epsilon(1). CF(0) has three main subunits: a(1), b(2) and c(9-12). The alpha and beta chains form an alternating ring which encloses part of the gamma chain. CF(1) is attached to CF(0) by a central stalk formed by the gamma and epsilon chains, while a peripheral stalk is formed by the delta and b chains.

It is found in the cell membrane. It catalyses the reaction ATP + H2O + 4 H(+)(in) = ADP + phosphate + 5 H(+)(out). Functionally, produces ATP from ADP in the presence of a proton gradient across the membrane. The alpha chain is a regulatory subunit. The sequence is that of ATP synthase subunit alpha from Mycoplasma pneumoniae (strain ATCC 29342 / M129 / Subtype 1) (Mycoplasmoides pneumoniae).